The chain runs to 224 residues: MGQKVHPTGIRLGIVKKHTSTWYAGKAEYADKLNQDLQVRKYIQNALAHASVSRIDIERPANTARVTIHTARPGIVIGKKGEDVEKLRTELTKQMGVPVHINIEEIRKPDLDAALAAQSVAQQLERRVMFRRAMKRTVQNAMRQGAEGVKVQVGGRLGGAEIARSEWYREGRVPLHTLRADIDYATAEASTTYGIIGVKVWIFKGEIIGGIEEVEANQKKKGSK.

The region spanning 39–107 (VRKYIQNALA…PVHINIEEIR (69 aa)) is the KH type-2 domain.

It belongs to the universal ribosomal protein uS3 family. Part of the 30S ribosomal subunit. Forms a tight complex with proteins S10 and S14.

Binds the lower part of the 30S subunit head. Binds mRNA in the 70S ribosome, positioning it for translation. This Saccharophagus degradans (strain 2-40 / ATCC 43961 / DSM 17024) protein is Small ribosomal subunit protein uS3.